A 147-amino-acid polypeptide reads, in one-letter code: Hemoglobin subunit beta (147 aa).

In terms of domain architecture, Globin spans 3-147 (EWTDKERTII…VVSALGKQYH (145 aa)). Positions 64 and 93 each coordinate heme b.

The protein belongs to the globin family. As to quaternary structure, heterotetramer of two alpha chains and two beta chains. In terms of tissue distribution, red blood cells.

Involved in oxygen transport from gills to the various peripheral tissues. This chain is Hemoglobin subunit beta, found in Trematomus newnesi (Dusky notothen).